The sequence spans 133 residues: Small ribosomal subunit protein uS8 (133 aa).

The protein belongs to the universal ribosomal protein uS8 family. As to quaternary structure, part of the 30S ribosomal subunit. Contacts proteins S5 and S12.

Functionally, one of the primary rRNA binding proteins, it binds directly to 16S rRNA central domain where it helps coordinate assembly of the platform of the 30S subunit. The protein is Small ribosomal subunit protein uS8 of Cyanothece sp. (strain PCC 7425 / ATCC 29141).